We begin with the raw amino-acid sequence, 522 residues long: GMP synthase [glutamine-hydrolyzing] (522 aa).

A Glutamine amidotransferase type-1 domain is found at 9-204 (KILILDFGAQ…VVDICGCQML (196 aa)). Catalysis depends on Cys86, which acts as the Nucleophile. Residues His178 and Glu180 contribute to the active site. The GMPS ATP-PPase domain maps to 205-397 (WTAANIIEDQ…LGLPHAMVYR (193 aa)). 232–238 (SGGVDSS) serves as a coordination point for ATP.

In terms of assembly, homodimer.

It catalyses the reaction XMP + L-glutamine + ATP + H2O = GMP + L-glutamate + AMP + diphosphate + 2 H(+). Its pathway is purine metabolism; GMP biosynthesis; GMP from XMP (L-Gln route): step 1/1. Functionally, catalyzes the synthesis of GMP from XMP. This Xylella fastidiosa (strain 9a5c) protein is GMP synthase [glutamine-hydrolyzing] (guaA).